The primary structure comprises 271 residues: Extent of cell elongation protein 1 (271 aa).

The signal sequence occupies residues 1–18 (MKFSKIACATVFALSSQA). The helical transmembrane segment at 62-82 (SIIGIIMGILGNIPQVIQIIM) threads the bilayer.

In terms of assembly, polymerizes in solution to form membrane pores. Post-translationally, cleavage by KEX2 generates 8 peptides ECE1-I to ECE1-VIII, all terminating in Lys-Arg. Only peptide ECE1-III, called candidalysin, shows toxin activity.

The protein localises to the secreted. It localises to the host cell membrane. Functionally, secreted protein cleaved by KEX2 in 8 similar peptides (ECE1-I to ECE1-VIII). Stimulates biofilm formation. Acts as a cytolytic peptide toxin that directly damages host epithelial membranes, triggers a danger response signaling pathway and activates epithelial immunity. Polymerizes in solution to form membrane pores to damage epithelial cells. Induces calcium influx, oxidative stress, mitochondrial dysfunction and ATP depletion in host cells, leading to epithelial necrosis. Serves as a danger signal that potentiates the immune response, and more specifically IL-17 response. Induces cytokine/chemokine secretion by host (especially CCL2/3/4, CXCL1 and S100A8), neutrophil recruitment, and promotes mortality in zebrafish and murine models of systemic fungal infection. Mediates distinct epithelial inflammatory responses through p38, EGFR-ERK and TREM-1/DAP12 pathways. Acts as one of the hypha-derived drivers of NLRP3 inflammasome responses in primary macrophages and thus contributes to the capacity to induce maturation and secretion of IL-1beta from primary macrophages. Stimulates mast cells by mediating cross-talk between signaling pathways activated by the dectin-1 receptor and MAPKs. Enables escape via the gasdermin-mediated pyroptosis, as well as a cell lysis pathway associated with macrophage extracellular trap formation termed ETosis. Acts as the main hemolytic factor of C.albicans. As an exotoxine, also promotes alcohol-associated liver disease or oral carcinogenesis. This is Extent of cell elongation protein 1 from Candida albicans (strain SC5314 / ATCC MYA-2876) (Yeast).